The primary structure comprises 167 residues: Photosystem I assembly protein Ycf3 (167 aa).

TPR repeat units follow at residues 35–68 (AFAY…EVDA), 72–105 (SYIL…NPSL), and 120–153 (GEQA…APTN).

This sequence belongs to the Ycf3 family.

The protein localises to the plastid. The protein resides in the chloroplast thylakoid membrane. Its function is as follows. Essential for the assembly of the photosystem I (PSI) complex. May act as a chaperone-like factor to guide the assembly of the PSI subunits. In Stigeoclonium helveticum (Green alga), this protein is Photosystem I assembly protein Ycf3.